The chain runs to 250 residues: Virulence plasmid protein pGP6-D-related protein (250 aa).

Belongs to the UPF0137 (pGP6-D) family.

The protein is Virulence plasmid protein pGP6-D-related protein of Chlamydia pneumoniae (Chlamydophila pneumoniae).